Here is a 561-residue protein sequence, read N- to C-terminus: Urocanate hydratase (561 aa).

Residues 52 to 53 (GG), Gln130, 176 to 178 (GMG), Glu196, Arg201, 242 to 243 (NA), 263 to 267 (QTSAH), 273 to 274 (YL), and Tyr322 contribute to the NAD(+) site. Cys410 is an active-site residue. NAD(+) is bound at residue Gly492.

It belongs to the urocanase family. Requires NAD(+) as cofactor.

The protein localises to the cytoplasm. The catalysed reaction is 4-imidazolone-5-propanoate = trans-urocanate + H2O. It functions in the pathway amino-acid degradation; L-histidine degradation into L-glutamate; N-formimidoyl-L-glutamate from L-histidine: step 2/3. Its function is as follows. Catalyzes the conversion of urocanate to 4-imidazolone-5-propionate. This Salmonella agona (strain SL483) protein is Urocanate hydratase.